A 301-amino-acid chain; its full sequence is General transcription and DNA repair factor IIH subunit TFB4 (301 aa).

The C4-type zinc finger occupies 259 to 276 (CSVCLSIFCEHHKKCSTC).

This sequence belongs to the TFB4 family. As to quaternary structure, component of the 7-subunit TFIIH core complex composed of XPB, XPD, TFB1/GTF2H1, GTF2H2/P44, TFB4/GTF2H3, TFB2/GTF2H4 and TFB5/GTF2H5, which is active in NER. The core complex associates with the 3-subunit CDK-activating kinase (CAK) module composed of CYCH1/cyclin H1, CDKD and MAT1/At4g30820 to form the 10-subunit holoenzyme (holo-TFIIH) active in transcription.

Its subcellular location is the nucleus. Component of the general transcription and DNA repair factor IIH (TFIIH) core complex, which is involved in general and transcription-coupled nucleotide excision repair (NER) of damaged DNA and, when complexed to CAK, in RNA transcription by RNA polymerase II. In NER, TFIIH acts by opening DNA around the lesion to allow the excision of the damaged oligonucleotide and its replacement by a new DNA fragment. In transcription, TFIIH has an essential role in transcription initiation. When the pre-initiation complex (PIC) has been established, TFIIH is required for promoter opening and promoter escape. Phosphorylation of the C-terminal tail (CTD) of the largest subunit of RNA polymerase II by the kinase module CAK controls the initiation of transcription. The polypeptide is General transcription and DNA repair factor IIH subunit TFB4 (Arabidopsis thaliana (Mouse-ear cress)).